A 394-amino-acid chain; its full sequence is Magnesium transporter MRS2-2 (394 aa).

The segment at proline 115–glutamate 145 is disordered. The next 2 helical transmembrane spans lie at leucine 329 to glycine 349 and tyrosine 366 to alanine 386. The short motif at glycine 349–asparagine 351 is the Required for magnesium transport activity element.

Belongs to the CorA metal ion transporter (MIT) (TC 1.A.35.5) family. In terms of tissue distribution, expressed in the whole plant but preferentially in the mature anthers.

The protein localises to the membrane. Its function is as follows. Low-affinity magnesium transporter that mediates the influx of magnesium. Plays a crucial role in male gametophyte development and male fertility. The sequence is that of Magnesium transporter MRS2-2 (MRS2-2) from Arabidopsis thaliana (Mouse-ear cress).